Consider the following 317-residue polypeptide: Brain-specific serine protease 4 (317 aa).

An N-terminal signal peptide occupies residues 1–32 (MVVSGAPPALGGGCLGTFTSLLLLASTAILNA). Residues 50 to 290 (VVGGEDSTDS…HRSWVEKIVQ (241 aa)) form the Peptidase S1 domain. The N-linked (GlcNAc...) asparagine glycan is linked to N70. Residues C75 and C91 are joined by a disulfide bond. Residues H90 and D141 each act as charge relay system in the active site. Cystine bridges form between C175–C248, C208–C227, and C238–C266. S242 acts as the Charge relay system in catalysis.

This sequence belongs to the peptidase S1 family. As to expression, expressed abundantly in the epithelial cells of the airways, including trachea, esophagus and fetal lung. Scarce in adult lung. Expressed at low levels in placenta, pancreas, prostate and thyroid gland.

It localises to the secreted. Its function is as follows. Preferentially cleaves the synthetic substrate H-D-Leu-Thr-Arg-pNA compared to tosyl-Gly-Pro-Arg-pNA. The protein is Brain-specific serine protease 4 (PRSS22) of Homo sapiens (Human).